The sequence spans 177 residues: Shikimate kinase (177 aa).

17–22 (GAGKST) is an ATP binding site. Serine 21 is a Mg(2+) binding site. Aspartate 39, arginine 63, and glycine 85 together coordinate substrate. Arginine 123 contributes to the ATP binding site. Residue arginine 142 coordinates substrate. Arginine 160 serves as a coordination point for ATP.

Belongs to the shikimate kinase family. As to quaternary structure, monomer. Requires Mg(2+) as cofactor.

It is found in the cytoplasm. It catalyses the reaction shikimate + ATP = 3-phosphoshikimate + ADP + H(+). It participates in metabolic intermediate biosynthesis; chorismate biosynthesis; chorismate from D-erythrose 4-phosphate and phosphoenolpyruvate: step 5/7. In terms of biological role, catalyzes the specific phosphorylation of the 3-hydroxyl group of shikimic acid using ATP as a cosubstrate. This chain is Shikimate kinase, found in Halorhodospira halophila (strain DSM 244 / SL1) (Ectothiorhodospira halophila (strain DSM 244 / SL1)).